The following is a 522-amino-acid chain: Protein nucleotidyltransferase YdiU (522 aa).

Positions 109, 111, 112, 132, 144, 145, 195, and 202 each coordinate ATP. Asp-271 acts as the Proton acceptor in catalysis. Asn-272 and Asp-281 together coordinate Mg(2+). Asp-281 provides a ligand contact to ATP.

This sequence belongs to the SELO family. Mg(2+) serves as cofactor. Mn(2+) is required as a cofactor.

It catalyses the reaction L-seryl-[protein] + ATP = 3-O-(5'-adenylyl)-L-seryl-[protein] + diphosphate. The enzyme catalyses L-threonyl-[protein] + ATP = 3-O-(5'-adenylyl)-L-threonyl-[protein] + diphosphate. It carries out the reaction L-tyrosyl-[protein] + ATP = O-(5'-adenylyl)-L-tyrosyl-[protein] + diphosphate. The catalysed reaction is L-histidyl-[protein] + UTP = N(tele)-(5'-uridylyl)-L-histidyl-[protein] + diphosphate. It catalyses the reaction L-seryl-[protein] + UTP = O-(5'-uridylyl)-L-seryl-[protein] + diphosphate. The enzyme catalyses L-tyrosyl-[protein] + UTP = O-(5'-uridylyl)-L-tyrosyl-[protein] + diphosphate. Functionally, nucleotidyltransferase involved in the post-translational modification of proteins. It can catalyze the addition of adenosine monophosphate (AMP) or uridine monophosphate (UMP) to a protein, resulting in modifications known as AMPylation and UMPylation. The sequence is that of Protein nucleotidyltransferase YdiU from Burkholderia vietnamiensis (strain G4 / LMG 22486) (Burkholderia cepacia (strain R1808)).